Here is a 261-residue protein sequence, read N- to C-terminus: Zinc finger protein 664 (261 aa).

C2H2-type zinc fingers lie at residues Y3–H25, H31–H53, Y59–H81, Y87–H109, Y115–H137, F143–H165, Y171–H193, Y199–H221, and F227–H249. Residue K257 forms a Glycyl lysine isopeptide (Lys-Gly) (interchain with G-Cter in SUMO2) linkage.

The protein belongs to the krueppel C2H2-type zinc-finger protein family.

It is found in the nucleus. In terms of biological role, may be involved in transcriptional regulation. This chain is Zinc finger protein 664 (Znf664), found in Mus musculus (Mouse).